The sequence spans 281 residues: LC-AMP precursor 3 (281 aa).

The signal sequence occupies residues 1 to 19; that stretch reads MKYTIIPFLLLVALTCATA. A propeptide spanning residues 20–56 is cleaved from the precursor; the sequence is RSIDGSEKEVQEIREETPSSNEDVPFSLSANEDEEAR. Leu74 is subject to Leucine amide. Residues 75-89 constitute a propeptide that is removed on maturation; it reads GREESLSANEDEEAR. Ser114 bears the Serine amide mark. Residues 115 to 129 constitute a propeptide that is removed on maturation; that stretch reads GREESFSANEDEEER. Leu147 is subject to Leucine amide. The propeptide occupies 148–162; sequence GREESISANEDEETR. Leu180 carries the leucine amide modification. The propeptide occupies 181-195; the sequence is GREESLSAIEDEEAR. Leucine amide is present on Leu213. Residues 214–228 constitute a propeptide that is removed on maturation; that stretch reads GREESLSANEDEEAR. Leu246 is modified (leucine amide). A propeptide spanning residues 247–261 is cleaved from the precursor; that stretch reads GREESLSANEDEEAR. The residue at position 279 (Leu279) is a Leucine amide.

Expressed by the venom gland.

It localises to the secreted. In terms of biological role, antimicrobial peptide that acts by influencing bacterial cell membrane permeability at low concentrations and by directly disrupting structure-function at high concentrations. Shows activity against Gram-negative bacteria (S.typhimurium CGMCC 1.1174 (MIC=2.5 uM), E.coli CCTCC AB 2018675 (MIC=5 uM), S.dysenteriae CGMCC 1.1869 (MIC=2.5 uM), P.aeruginosa CGMCC 1.596 (MIC 5-10 uM), K.pneumoniae (MIC=10 uM), A.baumannii (MIC=5-10 uM)), and Gram-positive bacteria (S.aureus CMCC 26003 or MRSA ATCC 43300 (MIC=5 uM), and E.faecium (MIC=2.5-5 uM)). Inhibits biofilm formation of E.coli and S.aureus in a dose-dependent manner and disrupts established biofilms. Demonstrates minimal bacterial resistance, excellent stability, negligible mammalian cell toxicity, low hemolytic activity, and appropriate selectivity for both normal and tumor cells. When combined with traditional antibiotics, exhibits additive or synergistic therapeutic effects. In vivo, in a neutropenic mouse thigh infection model, exhibits a therapeutic effect in inhibiting bacterial proliferation. This chain is LC-AMP precursor 3, found in Lycosa coelestis (Wolf spider).